The primary structure comprises 92 residues: Small ribosomal subunit protein bS20 (92 aa).

The disordered stretch occupies residues 1 to 23; it reads MANTTSAKKATRKIARRTDVNKA.

This sequence belongs to the bacterial ribosomal protein bS20 family.

In terms of biological role, binds directly to 16S ribosomal RNA. The chain is Small ribosomal subunit protein bS20 from Rhizobium leguminosarum bv. trifolii (strain WSM2304).